The sequence spans 471 residues: Galactolipase DONGLE, chloroplastic (471 aa).

A chloroplast-targeting transit peptide spans 1-88 (MAAKVFTQNP…PLSRVWREIQ (88 aa)). A disordered region spans residues 44-71 (SSSTMSPPISSSPLSLPSSSSSQAIPPS). The GXSXG signature appears at 284-288 (GHSMG). Ser-286 acts as the Acyl-ester intermediate in catalysis. Active-site charge relay system residues include Asp-349 and His-400.

This sequence belongs to the AB hydrolase superfamily. Lipase family. Expressed in leaves and seedlings. Not detected in flowers, siliques or roots.

The protein localises to the plastid. Its subcellular location is the chloroplast. The catalysed reaction is a 1,2-diacyl-3-O-(beta-D-galactosyl)-sn-glycerol + 2 H2O = 3-beta-D-galactosyl-sn-glycerol + 2 a fatty acid + 2 H(+). It carries out the reaction a 1,2-diacyl-sn-glycero-3-phosphocholine + H2O = a 2-acyl-sn-glycero-3-phosphocholine + a fatty acid + H(+). It catalyses the reaction a 1,2-diacyl-3-O-[alpha-D-galactosyl-(1-&gt;6)-beta-D-galactosyl]-sn-glycerol + H2O = acyl-3-O-[alpha-D-galactosyl-(1-&gt;6)-beta-D-galactosyl]-sn-glycerol + a fatty acid + H(+). Sn-1-specific phospholipase that releases free fatty acids from phosphatidylcholine. Has a higher galactolipase activity than phospholipase A1 activity when digalactosyldiacylglycerol (DGDG) is used as substrate. Catalyzes the initial step of jasmonic acid biosynthesis. Required for the biosynthesis of basal-level endogenous jasmonate in vegetative tissues. Regulates leaves growth. Not essential for jasmonate biosynthesis after wounding or upon pathogen infection. The chain is Galactolipase DONGLE, chloroplastic from Arabidopsis thaliana (Mouse-ear cress).